Here is a 493-residue protein sequence, read N- to C-terminus: Guanosine-5'-triphosphate,3'-diphosphate pyrophosphatase (493 aa).

Belongs to the GppA/Ppx family. GppA subfamily.

The catalysed reaction is guanosine 3'-diphosphate 5'-triphosphate + H2O = guanosine 3',5'-bis(diphosphate) + phosphate + H(+). The protein operates within purine metabolism; ppGpp biosynthesis; ppGpp from GTP: step 2/2. Catalyzes the conversion of pppGpp to ppGpp. Guanosine pentaphosphate (pppGpp) is a cytoplasmic signaling molecule which together with ppGpp controls the 'stringent response', an adaptive process that allows bacteria to respond to amino acid starvation, resulting in the coordinated regulation of numerous cellular activities. This is Guanosine-5'-triphosphate,3'-diphosphate pyrophosphatase from Salmonella choleraesuis (strain SC-B67).